A 483-amino-acid chain; its full sequence is Glutamyl-tRNA(Gln) amidotransferase subunit A (483 aa).

Residues lysine 77 and serine 152 each act as charge relay system in the active site. Serine 176 (acyl-ester intermediate) is an active-site residue.

It belongs to the amidase family. GatA subfamily. In terms of assembly, heterotrimer of A, B and C subunits.

The enzyme catalyses L-glutamyl-tRNA(Gln) + L-glutamine + ATP + H2O = L-glutaminyl-tRNA(Gln) + L-glutamate + ADP + phosphate + H(+). In terms of biological role, allows the formation of correctly charged Gln-tRNA(Gln) through the transamidation of misacylated Glu-tRNA(Gln) in organisms which lack glutaminyl-tRNA synthetase. The reaction takes place in the presence of glutamine and ATP through an activated gamma-phospho-Glu-tRNA(Gln). The chain is Glutamyl-tRNA(Gln) amidotransferase subunit A from Listeria monocytogenes serovar 1/2a (strain ATCC BAA-679 / EGD-e).